The chain runs to 259 residues: Exosome complex component Rrp42 (259 aa).

This sequence belongs to the RNase PH family. Rrp42 subfamily. Component of the archaeal exosome complex. Forms a hexameric ring-like arrangement composed of 3 Rrp41-Rrp42 heterodimers. The hexameric ring associates with a trimer of Rrp4 and/or Csl4 subunits.

It is found in the cytoplasm. Non-catalytic component of the exosome, which is a complex involved in RNA degradation. Contributes to the structuring of the Rrp41 active site. The protein is Exosome complex component Rrp42 of Archaeoglobus fulgidus (strain ATCC 49558 / DSM 4304 / JCM 9628 / NBRC 100126 / VC-16).